The following is a 184-amino-acid chain: Ethylene-responsive transcription factor ERF122 (184 aa).

The AP2/ERF DNA-binding region spans 120–177 (KYKGVRKKPSGKWAAEIWDPRSKSRRWLGTFLTAEMAAQSYNDAAAEYRARRGKTNGE).

Belongs to the AP2/ERF transcription factor family. ERF subfamily.

The protein resides in the nucleus. Functionally, probably acts as a transcriptional activator. Binds to the GCC-box pathogenesis-related promoter element. May be involved in the regulation of gene expression by stress factors and by components of stress signal transduction pathways. The protein is Ethylene-responsive transcription factor ERF122 (ERF122) of Arabidopsis thaliana (Mouse-ear cress).